We begin with the raw amino-acid sequence, 490 residues long: AP-5 complex subunit mu-1 (490 aa).

The MHD domain occupies 206–476; that stretch reads KPQVSISITE…LISSDYYIWN (271 aa).

The protein belongs to the adaptor complexes medium subunit family. In terms of assembly, probably part of the adaptor protein complex 5 (AP-5) a tetramer composed of AP5B1, AP5M1, AP5S1 and AP5Z1.

Its subcellular location is the cytoplasm. The protein resides in the cytosol. It is found in the late endosome membrane. It localises to the lysosome membrane. Its function is as follows. As part of AP-5, a probable fifth adaptor protein complex it may be involved in endosomal transport. In Macaca fascicularis (Crab-eating macaque), this protein is AP-5 complex subunit mu-1 (AP5M1).